Reading from the N-terminus, the 155-residue chain is Ribosome maturation factor RimP (155 aa).

It belongs to the RimP family.

It localises to the cytoplasm. Required for maturation of 30S ribosomal subunits. The polypeptide is Ribosome maturation factor RimP (Listeria monocytogenes serovar 1/2a (strain ATCC BAA-679 / EGD-e)).